The sequence spans 413 residues: Protein MANNAN SYNTHESIS-RELATED (413 aa).

At 1 to 5 (MNSME) the chain is on the cytoplasmic side. The chain crosses the membrane as a helical; Signal-anchor for type II membrane protein span at residues 6–26 (IRQAFAGLLTLSMFIMLGNMI). The Lumenal portion of the chain corresponds to 27 to 413 (KKDHFDYPAE…KNHLAYKCFC (387 aa)). N-linked (GlcNAc...) asparagine glycosylation occurs at N207. 255–257 (DLR) contributes to the substrate binding site.

This sequence belongs to the glycosyltransferase GT106 family. In terms of tissue distribution, highly and specifically expressed in the endosperm.

It localises to the golgi apparatus membrane. The protein operates within glycan biosynthesis. Glycosyltransferase involved in mannan biosynthesis. The sequence is that of Protein MANNAN SYNTHESIS-RELATED from Trigonella foenum-graecum (Fenugreek).